A 70-amino-acid chain; its full sequence is Large ribosomal subunit protein bL31 (70 aa).

It belongs to the bacterial ribosomal protein bL31 family. Type A subfamily. As to quaternary structure, part of the 50S ribosomal subunit.

In terms of biological role, binds the 23S rRNA. The polypeptide is Large ribosomal subunit protein bL31 (Mycoplasma mobile (strain ATCC 43663 / 163K / NCTC 11711) (Mesomycoplasma mobile)).